We begin with the raw amino-acid sequence, 1462 residues long: uncharacterized protein (1462 aa).

The helical transmembrane segment at 119 to 139 (TGYITSLCLSAILKFFSFRII) threads the bilayer. Phosphoserine is present on residues Ser411 and Ser420. The SEC7 domain occupies 541–730 (TLIESKKRKA…SEIYKAIKEN (190 aa)). The HEAT repeat unit spans residues 1102-1139 (ENSEDWGLFSKLCNLLNDKNIVVRNQSLSLFHQLVNKY).

It is found in the cytoplasm. It localises to the golgi apparatus membrane. This is an uncharacterized protein from Schizosaccharomyces pombe (strain 972 / ATCC 24843) (Fission yeast).